A 119-amino-acid polypeptide reads, in one-letter code: MSKIDKASRRQKIKDRSRFSVAGTQEKPRLCVYRSLSQIYAQLIDDSGKKTIMAVSSMSKENKELKGSKTEVCHRVGKQIAEKALANGITNVVFDRNGFRYHGRIKALADGAREAGLIF.

Belongs to the universal ribosomal protein uL18 family. Part of the 50S ribosomal subunit; part of the 5S rRNA/L5/L18/L25 subcomplex. Contacts the 5S and 23S rRNAs.

Functionally, this is one of the proteins that bind and probably mediate the attachment of the 5S RNA into the large ribosomal subunit, where it forms part of the central protuberance. This is Large ribosomal subunit protein uL18 from Chlorobium luteolum (strain DSM 273 / BCRC 81028 / 2530) (Pelodictyon luteolum).